The sequence spans 351 residues: Dysbindin (351 aa).

At S11 the chain carries Phosphoserine. Positions 88 to 181 form a coiled coil; sequence EKKKTSLVEL…ELDAEHAQKV (94 aa). Residues 173–331 form a dysbindin region; it reads LDAEHAQKVL…DEEEVQVDTA (159 aa). Residues 243 to 256 carry the Nuclear export signal motif; it reads LMDISDQEALDVFL. The tract at residues 286-351 is disordered; the sequence is PNPSELRAKP…TPDGGEDSDS (66 aa). The segment covering 296 to 305 has biased composition (polar residues); that stretch reads PSSSSTCTDS. A phosphoserine mark is found at S316, S321, and S349.

The protein belongs to the dysbindin family. Interacts (via its coiled coil domain) with KXD1. Interacts with CMYA5, PI4K2 and RNF151. Component of the biogenesis of lysosome-related organelles complex 1 (BLOC-1) composed of at least BLOC1S1, BLOC1S2, BLOC1S3, BLOC1S4, BLOC1S5, BLOC1S6, DTNBP1/BLOC1S7 and SNAPIN/BLOC1S8. Interacts directly in the complex with BLOC1S5, BLOC1S6 and SNAPIN/BLOC1S8. The BLOC-1 complex associates with the AP-3 protein complex and membrane protein cargos. This BLOC-1 complex also associates with the BLOC-2 complex in endosomes. Binds to DTNA and DTNB but may not be a physiological binding partner. Interacts (isoform 1 and isoform 2 only) with the DNA-dependent protein kinase complex DNA-PK; the interaction phosphorylates DTNBP1 in vitro. Interacts directly in this complex with XRCC5 and XRCC6. Interacts with AP3M1, AP3B2 and TRIM32. Interacts with XPO1; the interaction exports DTNBP1 out of the nucleus. Ubiquitinated by TRIM32. Ubiquitination leads to DTNBP1 degradation. In terms of processing, isoforms 1 and 2 highly phosphorylated by PRKDC in vitro. Isoform 3 only weakly phosphorylated by PRKDC in vitro. As to expression, detected in brain, in neurons and in neuropil. Isoform 1 is expressed in the cerebral cortex, and hippocampal frontal (HF). Specific expression in the posterior half of the superior temporal gyrus (pSTG). Higher expression of isoform 2 and 3 in the HF than in the pSTG while isoform 1 shows no difference in expression in these areas. In the HF, detected in dentate gyrus (DG) and in pyramidal cells of hippocampus CA2 and CA3 (at protein level). Expressed in all principal neuronal populations of the HF, namely pyramidal neurons in the subiculum and CA1-3, granule cells in the dense cell layer of the DG (DGg), and polymorph cells in the hilus of the DG (DGh). Maximal levels in CA2, CA3, and DGh. Isoform 2 not expressed in the cerebral cortex.

It localises to the cytoplasm. Its subcellular location is the cytoplasmic vesicle membrane. The protein localises to the endosome membrane. The protein resides in the melanosome membrane. It is found in the postsynaptic density. It localises to the endoplasmic reticulum. Its subcellular location is the nucleus. The protein localises to the cytoplasmic vesicle. The protein resides in the secretory vesicle. It is found in the synaptic vesicle membrane. It localises to the postsynaptic cell membrane. Component of the BLOC-1 complex, a complex that is required for normal biogenesis of lysosome-related organelles (LRO), such as platelet dense granules and melanosomes. In concert with the AP-3 complex, the BLOC-1 complex is required to target membrane protein cargos into vesicles assembled at cell bodies for delivery into neurites and nerve terminals. The BLOC-1 complex, in association with SNARE proteins, is also proposed to be involved in neurite extension. Associates with the BLOC-2 complex to facilitate the transport of TYRP1 independent of AP-3 function. Plays a role in synaptic vesicle trafficking and in neurotransmitter release. Plays a role in the regulation of cell surface exposure of DRD2. May play a role in actin cytoskeleton reorganization and neurite outgrowth. May modulate MAPK8 phosphorylation. Appears to promote neuronal transmission and viability through regulating the expression of SNAP25 and SYN1, modulating PI3-kinase-Akt signaling and influencing glutamatergic release. Regulates the expression of SYN1 through binding to its promoter. Modulates prefrontal cortical activity via the dopamine/D2 pathway. The sequence is that of Dysbindin (DTNBP1) from Homo sapiens (Human).